The sequence spans 298 residues: GTP cyclohydrolase FolE2 (298 aa).

This sequence belongs to the GTP cyclohydrolase IV family.

It carries out the reaction GTP + H2O = 7,8-dihydroneopterin 3'-triphosphate + formate + H(+). The protein operates within cofactor biosynthesis; 7,8-dihydroneopterin triphosphate biosynthesis; 7,8-dihydroneopterin triphosphate from GTP: step 1/1. Converts GTP to 7,8-dihydroneopterin triphosphate. This Pseudomonas fluorescens (strain SBW25) protein is GTP cyclohydrolase FolE2.